The chain runs to 413 residues: ATP-dependent (S)-NAD(P)H-hydrate dehydratase (413 aa).

In terms of domain architecture, YjeF C-terminal spans 98–402 (NLNHFLSYVP…KSVPNALVWG (305 aa)). Residues G199 and 252–258 (NFVEYRA) each bind (6S)-NADPHX. ATP contacts are provided by residues 292–296 (KGQED) and 311–320 (GMPRRCGGQG). D321 is a binding site for (6S)-NADPHX.

This sequence belongs to the NnrD/CARKD family. Mg(2+) serves as cofactor.

The enzyme catalyses (6S)-NADHX + ATP = ADP + phosphate + NADH + H(+). The catalysed reaction is (6S)-NADPHX + ATP = ADP + phosphate + NADPH + H(+). In terms of biological role, catalyzes the dehydration of the S-form of NAD(P)HX at the expense of ATP, which is converted to ADP. Together with NAD(P)HX epimerase, which catalyzes the epimerization of the S- and R-forms, the enzyme allows the repair of both epimers of NAD(P)HX, a damaged form of NAD(P)H that is a result of enzymatic or heat-dependent hydration. In Heterostelium pallidum (strain ATCC 26659 / Pp 5 / PN500) (Cellular slime mold), this protein is ATP-dependent (S)-NAD(P)H-hydrate dehydratase.